The following is a 1140-amino-acid chain: MHRRSSGSSPDADDAEDSLASRSSEPSHGCELPEKPLPEIARTGTSIDLRRDTNGKSTPRSRNSSTWRTLSSATTTWASHDPPRYPAVMITPQRLAIEASPDSPHRSRLARLRSPWSCSILTALTTILACVFLFSIVRSFSALQTGSDGCGVPVMSPTFLRMVGFDTEHTRFASKYNLFLYREEGVDPYNHENLGLNGAPVLFLPGNAGSYRQVRSLAAEASRHYAQVVQHDQERLRAGTRSLDFFMIDFNEDMAAFHGQTLLDQAEYVNEAVAYILSLYHDPRRTRRDADLPDPSSVILIGHSMGGIVARTALTMANYQENSVNTIITMSAPHAKAPVSFDSDIVHTYKQINDYWREAYSQTWANNNPLWHVTLISIAGGSRDTVVPSDYASISSLVPETHGFTVFTSTMPDVWIGVDHLSITWCDQFRKAIIKSLFDVVDVRRASQTKPRAERMRIFKKWYLTGLESVSERMLTRNEPSTLVTLEDHTNTILAQGQRLVLRELGHRTGPNVHLLPVPPQGVSGKKFTLLTDQRLDRTGEQGSLEVLFCSVFPLHNGKASSVFALNMDSSDSSGSTRLACKNAAVDEIHLPASTRTSRNAYDRARPFSYLQYDLEDLAEHQFVAVVDKARVPMKGWAIAEFSDSSDALIKARIGLGGLLSAGLKVRLPANRPMLTEVRIPALYSSLLDYKLRVVRHHQAGDPRELFAPLLRQSIADPHESKFFVNVDKVNVNLHGLAPYMPPPLRQTSQNGVSFQLWTDPTCDSTVDITLTVDIVSSLGELVMRYRTVFAAFPLLVVSLTLRKQFQVYDETGFFITFAEGLDSALRSSMPALLLAMSLLASSLATSTKLPTGDDPFHWATNSTETPIDFTKNDLLLGSQDAFFWFLVPLFGLICVGVCVLLNYVALIVLQILSVVYGLWNSKSGYIRRDEKGYLPVFPAPSPRRRMIKMGVLLVLVSTAIPYQFAYLVACIVQLATCVRAQWHAKETRSTAHYNFANYAYSVFILMLWVLPINILVLLVWAHNLVVHWFMPFSSHHNVLSIMPFIILVETMTTGSMIPRVTTRFKHVTSVLLFCIAVYSAVYGVSYAYISHHLVNILAGWLVSIYFFRSGFSLHRFWKIVEGDETPSTPESGSHMKKKP.

The disordered stretch occupies residues 1–84 (MHRRSSGSSP…TTWASHDPPR (84 aa)). A compositionally biased stretch (polar residues) spans 55-78 (GKSTPRSRNSSTWRTLSSATTTWA). N-linked (GlcNAc...) asparagine glycosylation occurs at Asn63. A helical membrane pass occupies residues 117–137 (SCSILTALTTILACVFLFSIV). Residue Ser304 is part of the active site. Residues 782 to 802 (LVMRYRTVFAAFPLLVVSLTL) traverse the membrane as a helical segment. Residue Asn862 is glycosylated (N-linked (GlcNAc...) asparagine). The next 7 helical transmembrane spans lie at 882–902 (AFFWFLVPLFGLICVGVCVLL), 905–925 (VALIVLQILSVVYGLWNSKSG), 952–972 (VLLVLVSTAIPYQFAYLVACI), 1002–1022 (SVFILMLWVLPINILVLLVWA), 1039–1059 (VLSIMPFIILVETMTTGSMIP), 1070–1090 (SVLLFCIAVYSAVYGVSYAYI), and 1094–1114 (LVNILAGWLVSIYFFRSGFSL).

It belongs to the GPI inositol-deacylase family.

The protein localises to the endoplasmic reticulum membrane. Functionally, involved in inositol deacylation of GPI-anchored proteins which plays important roles in the quality control and ER-associated degradation of GPI-anchored proteins. The polypeptide is GPI inositol-deacylase (bst1) (Emericella nidulans (strain FGSC A4 / ATCC 38163 / CBS 112.46 / NRRL 194 / M139) (Aspergillus nidulans)).